The sequence spans 547 residues: Chaperonin GroEL (547 aa).

Residues 30-33 (TLGP), Lys51, 87-91 (DGTTT), Gly415, and Asp495 contribute to the ATP site.

The protein belongs to the chaperonin (HSP60) family. In terms of assembly, forms a cylinder of 14 subunits composed of two heptameric rings stacked back-to-back. Interacts with the co-chaperonin GroES.

The protein resides in the cytoplasm. The enzyme catalyses ATP + H2O + a folded polypeptide = ADP + phosphate + an unfolded polypeptide.. In terms of biological role, together with its co-chaperonin GroES, plays an essential role in assisting protein folding. The GroEL-GroES system forms a nano-cage that allows encapsulation of the non-native substrate proteins and provides a physical environment optimized to promote and accelerate protein folding. In Rhizobium leguminosarum bv. trifolii (strain WSM2304), this protein is Chaperonin GroEL.